The chain runs to 266 residues: Calpain small subunit 1 (266 aa).

Met-1 is modified (N-acetylmethionine). Residue Ser-6 is modified to Phosphoserine. One can recognise an EF-hand 1; atypical domain in the interval 94-128 (EEVRQFRRLFAQLAGDDMEVSATELMNILNKVVTR). Residues Ala-107, Asp-110, Glu-112, Glu-117, Asp-135, Asp-150, Asp-152, Thr-154, Lys-156, and Glu-161 each contribute to the Ca(2+) site. 4 EF-hand domains span residues 137–170 (FGLD…NNIK), 167–202 (NNIK…AGFH), 203–231 (LNEH…ISCL), and 232–266 (VRLD…TMYS). Lys-177 is subject to N6-acetyllysine. Asp-180, Asp-182, Ser-184, Thr-186, Glu-191, and Asp-223 together coordinate Ca(2+).

In terms of assembly, homodimer or heterodimer of a large (catalytic) and a small (regulatory) subunit. In presence of calcium, the heterodimer dissociates. The N-terminus is blocked.

The protein localises to the cytoplasm. Its subcellular location is the cell membrane. Its function is as follows. Regulatory subunit of the calcium-regulated non-lysosomal thiol-protease which catalyzes limited proteolysis of substrates involved in cytoskeletal remodeling and signal transduction. Essential for embryonic development. The protein is Calpain small subunit 1 (CAPNS1) of Oryctolagus cuniculus (Rabbit).